A 180-amino-acid chain; its full sequence is 3-hydroxyanthranilate 3,4-dioxygenase (180 aa).

Residue Arg-46 participates in O2 binding. Fe cation-binding residues include His-50, Glu-56, and His-94. Glu-56 provides a ligand contact to substrate. Residues Arg-98 and Glu-109 each contribute to the substrate site. Residues Cys-124, Cys-127, Cys-161, and Cys-164 each contribute to the Fe cation site.

Belongs to the 3-HAO family. Homodimer. Requires Fe(2+) as cofactor.

The enzyme catalyses 3-hydroxyanthranilate + O2 = (2Z,4Z)-2-amino-3-carboxymuconate 6-semialdehyde. It functions in the pathway cofactor biosynthesis; NAD(+) biosynthesis; quinolinate from L-kynurenine: step 3/3. Its function is as follows. Catalyzes the oxidative ring opening of 3-hydroxyanthranilate to 2-amino-3-carboxymuconate semialdehyde, which spontaneously cyclizes to quinolinate. This is 3-hydroxyanthranilate 3,4-dioxygenase from Ruegeria pomeroyi (strain ATCC 700808 / DSM 15171 / DSS-3) (Silicibacter pomeroyi).